A 208-amino-acid chain; its full sequence is Thymidylate kinase (208 aa).

ATP is bound at residue 9–16; sequence GGEGCGKS.

This sequence belongs to the thymidylate kinase family.

The enzyme catalyses dTMP + ATP = dTDP + ADP. In terms of biological role, phosphorylation of dTMP to form dTDP in both de novo and salvage pathways of dTTP synthesis. The polypeptide is Thymidylate kinase (Dehalococcoides mccartyi (strain CBDB1)).